Reading from the N-terminus, the 108-residue chain is uncharacterized protein (108 aa).

The helical transmembrane segment at S15 to L37 threads the bilayer.

The protein localises to the membrane. This is an uncharacterized protein from Archaeoglobus fulgidus (strain ATCC 49558 / DSM 4304 / JCM 9628 / NBRC 100126 / VC-16).